The primary structure comprises 474 residues: Ankyrin repeat, SAM and basic leucine zipper domain-containing protein 1 (474 aa).

Positions 1 to 31 (MAGRLRGPAVPGGGESSDSDEDGWDIGYTER) are disordered. Ser-16, Ser-17, and Ser-19 each carry phosphoserine. ANK repeat units follow at residues 43-72 (EKDE…QVDS), 76-105 (FGWT…NASF), 108-142 (DQHT…SPNA), 146-175 (KRMS…EINA), 179-208 (NGYT…DKTL), and 212-241 (DGKT…PLHG). In terms of domain architecture, SAM spans 270–333 (SYSAFGDLEI…KIMDAVEELQ (64 aa)).

As to quaternary structure, interacts with DDX4, PIWIL1, RANBP9 and TDRD1.

It is found in the cytoplasm. Its function is as follows. Plays a central role during spermatogenesis by repressing transposable elements and preventing their mobilization, which is essential for the germline integrity. Acts via the piRNA metabolic process, which mediates the repression of transposable elements during meiosis by forming complexes composed of piRNAs and Piwi proteins and governs the methylation and subsequent repression of transposons. Its association with pi-bodies suggests a participation in the primary piRNAs metabolic process. Required prior to the pachytene stage to facilitate the production of multiple types of piRNAs, including those associated with repeats involved in the regulation of retrotransposons. May act by mediating protein-protein interactions during germ cell maturation. The protein is Ankyrin repeat, SAM and basic leucine zipper domain-containing protein 1 (ASZ1) of Ornithorhynchus anatinus (Duckbill platypus).